A 132-amino-acid polypeptide reads, in one-letter code: MSPRPLAWALVLLGAALAVALALGSAPAPGAREKLCGHHFVRALVRVCGGPRWSSEDGRRVAGGDRELLQWLEGRHLHGQVSDGDPMLVLVPQALPQASLHHHHRRAAATNPAHYCCLSGCSRQDLLTLCPH.

An N-terminal signal peptide occupies residues 1–24 (MSPRPLAWALVLLGAALAVALALG). 3 disulfide bridges follow: Cys-36–Cys-117, Cys-48–Cys-130, and Cys-116–Cys-121. The propeptide at 61-104 (VAGGDRELLQWLEGRHLHGQVSDGDPMLVLVPQALPQASLHHHH) is c peptide like.

The protein belongs to the insulin family. Heterodimer of a B chain and an A chain linked by two disulfide bonds. More strongly expressed in testis than in ovary.

It localises to the secreted. Its function is as follows. Seems to play a role in testicular function. May be a trophic hormone with a role in testicular descent in fetal life. Is a ligand for LGR8 receptor. The sequence is that of Insulin-like 3 (INSL3) from Canis lupus familiaris (Dog).